The following is a 560-amino-acid chain: MRSDRIKKGFERAPHRSLLRATGLNDGDFEKPFIGIANSHIDIIPGHYYLQEYGRIAKDEIRKAGGVPFEFNTIGVDDGIAMGHEGMRYSLPSRELIADSIETVMNAHQLDALVCIPNCDKIVPGMLMGALRVNVPTVFVSGGPMKAGHLHDGTPIDLNTAFEAVGKRAQGQITDAELYEIECQACPSGGSCSGMFTANSMNVLCEAMGVALPGNGTVLALTPEREALVRRAARRAVEIAADERFRLRNLVNRDAIHNAMVVDMAMGGSSNTVLHMLAISREAGAPLSLRDIEEIAGKVSHIAKIAPSLATVHMEDIHRAGGVPAVLREAARRGGIVREDALTVTGETVGERIRGARTADPELIRPLENAYSPVGGLAVLFGNLAAEGAVVKTAGIQPSMRTFTGEAICFDSQDEAIAGIMGGKVKPGHFVVIRYEGPKGGPGMQEMLSPTSLIMGMGLGESVALVTDGRFSGATRGACVGHVSPEAAEGGVIGLVQDGDRITIDVAARALTVDVSDAELARRREGFRPKRRDPGSSWLRRYAHLVTNAANGAVLRSTDL.

Position 78 (Asp-78) interacts with Mg(2+). Cys-119 serves as a coordination point for [2Fe-2S] cluster. Residues Asp-120 and Lys-121 each contribute to the Mg(2+) site. The residue at position 121 (Lys-121) is an N6-carboxylysine. Cys-192 contacts [2Fe-2S] cluster. Glu-446 is a binding site for Mg(2+). Ser-472 functions as the Proton acceptor in the catalytic mechanism.

This sequence belongs to the IlvD/Edd family. As to quaternary structure, homodimer. [2Fe-2S] cluster is required as a cofactor. The cofactor is Mg(2+).

It carries out the reaction (2R)-2,3-dihydroxy-3-methylbutanoate = 3-methyl-2-oxobutanoate + H2O. The catalysed reaction is (2R,3R)-2,3-dihydroxy-3-methylpentanoate = (S)-3-methyl-2-oxopentanoate + H2O. The protein operates within amino-acid biosynthesis; L-isoleucine biosynthesis; L-isoleucine from 2-oxobutanoate: step 3/4. It participates in amino-acid biosynthesis; L-valine biosynthesis; L-valine from pyruvate: step 3/4. In terms of biological role, functions in the biosynthesis of branched-chain amino acids. Catalyzes the dehydration of (2R,3R)-2,3-dihydroxy-3-methylpentanoate (2,3-dihydroxy-3-methylvalerate) into 2-oxo-3-methylpentanoate (2-oxo-3-methylvalerate) and of (2R)-2,3-dihydroxy-3-methylbutanoate (2,3-dihydroxyisovalerate) into 2-oxo-3-methylbutanoate (2-oxoisovalerate), the penultimate precursor to L-isoleucine and L-valine, respectively. This Anaeromyxobacter dehalogenans (strain 2CP-C) protein is Dihydroxy-acid dehydratase.